We begin with the raw amino-acid sequence, 323 residues long: Prenyl transferase (323 aa).

3 residues coordinate isopentenyl diphosphate: K46, R49, and H81. Positions 88 and 92 each coordinate Mg(2+). R97 lines the an all-trans-polyprenyl diphosphate pocket. R98 contributes to the isopentenyl diphosphate binding site. The an all-trans-polyprenyl diphosphate site is built by K174, T175, and Q212.

It belongs to the FPP/GGPP synthase family. Mg(2+) is required as a cofactor.

It is found in the plastid. Its subcellular location is the chloroplast. Its function is as follows. Possible role in synthesis of the nonaprenyl side chain of plastoquinone or in synthesis of other prenyl chains such as undekaprenyl pyrophosphate. The polypeptide is Prenyl transferase (preA) (Cyanidium caldarium (Red alga)).